Consider the following 316-residue polypeptide: Ribosomal RNA small subunit methyltransferase H (316 aa).

Residues 35 to 37, Asp55, Phe84, Asp105, and Gln112 each bind S-adenosyl-L-methionine; that span reads AGH.

This sequence belongs to the methyltransferase superfamily. RsmH family.

It localises to the cytoplasm. It carries out the reaction cytidine(1402) in 16S rRNA + S-adenosyl-L-methionine = N(4)-methylcytidine(1402) in 16S rRNA + S-adenosyl-L-homocysteine + H(+). In terms of biological role, specifically methylates the N4 position of cytidine in position 1402 (C1402) of 16S rRNA. This is Ribosomal RNA small subunit methyltransferase H from Streptococcus mutans serotype c (strain ATCC 700610 / UA159).